Consider the following 286-residue polypeptide: Structure-specific endonuclease subunit SLX1 (286 aa).

The 84-residue stretch at serine 15–asparagine 98 folds into the GIY-YIG domain.

This sequence belongs to the SLX1 family. Forms a heterodimer with SLX4. It depends on a divalent metal cation as a cofactor.

The protein localises to the nucleus. Functionally, catalytic subunit of the SLX1-SLX4 structure-specific endonuclease that resolves DNA secondary structures generated during DNA repair and recombination. Has endonuclease activity towards branched DNA substrates, introducing single-strand cuts in duplex DNA close to junctions with ss-DNA. In Candida dubliniensis (strain CD36 / ATCC MYA-646 / CBS 7987 / NCPF 3949 / NRRL Y-17841) (Yeast), this protein is Structure-specific endonuclease subunit SLX1.